The chain runs to 302 residues: L-glutamate/L-aspartate-binding protein (302 aa).

Residues 1–23 (MRIAPSLLSTAIVAALLSAPVVA) form the signal peptide.

It belongs to the bacterial solute-binding protein 3 family.

It localises to the periplasm. Binds L-glutamate and L-aspartate. The chain is L-glutamate/L-aspartate-binding protein from Pseudomonas aeruginosa (strain ATCC 15692 / DSM 22644 / CIP 104116 / JCM 14847 / LMG 12228 / 1C / PRS 101 / PAO1).